Reading from the N-terminus, the 1854-residue chain is Dystrophin, isoform D (1854 aa).

8 disordered regions span residues 1-65, 84-161, 240-352, 516-548, 595-650, 716-740, 783-830, and 1012-1036; these read MTTT…PIYA, GSTT…YEMP, QSPT…MSPA, LKPT…PTPS, TPGG…TSES, VMSK…PSTA, LKLQ…STTP, and VSDT…EQSR. Composition is skewed to low complexity over residues 11–37 and 84–96; these read QRQQ…QQHQ and GSTT…LQSS. Residues 143–157 show a composition bias toward polar residues; that stretch reads GLSSAQPATSASSGN. The span at 276–296 shows a compositional bias: low complexity; it reads QQQQQQQQAGINGQINGNGNQ. Composition is skewed to polar residues over residues 331–345 and 518–536; these read TLSR…SSAD and PTST…SNTA. Over residues 595 to 606 the composition is skewed to gly residues; sequence TPGGGVVGGQAA. Positions 716–727 are enriched in polar residues; sequence VMSKSNSSLGSV. 2 stretches are compositionally biased toward low complexity: residues 728-740 and 783-814; these read TTPS…PSTA and LKLQ…QQIQ. Over residues 815–830 the composition is skewed to polar residues; the sequence is NGFASDDNSSSCSTTP. 2 Spectrin repeats span residues 936–1069 and 1072–1176; these read EHWN…RLDE and TKMR…VLCQ. The disordered stretch occupies residues 1179 to 1209; that stretch reads AQQTHENGDDGRTTSNSGTIGPLPNLGQSVK. Positions 1206-1239 constitute a WW domain; it reads QSVKPPWERATTAANVPYYIDHERETTHWDHPEM. A ZZ-type zinc finger spans residues 1464 to 1520; the sequence is KHQAKCNICKEYPIVGFRYRCLKCFNFDMCQKCFFFGRNAKNHKLTHPMHEYCTTTT. Residues Cys1469, Cys1472, Cys1484, Cys1487, Cys1493, Cys1496, His1506, and His1510 each contribute to the Zn(2+) site. At Ser1564 the chain carries Phosphoserine. Disordered regions lie at residues 1673-1701 and 1744-1854; these read EQSG…GEQG and DEPN…ELQK. Polar residues-rich tracts occupy residues 1682–1694 and 1765–1796; these read NGMQ…MTGL and ALNS…QQNG. The segment covering 1815–1826 has biased composition (acidic residues); it reads QELESINDDLED. Low complexity predominate over residues 1827-1845; the sequence is SSSSNTTNTTTTTTTTATT.

Component of the dystrophin associated protein complex (DAPC). Interacts with Dg, via the Dg WW domain binding sites. In terms of tissue distribution, during embryogenesis and in third instar larvae, expression is seen in pericardial cells of the dorsal vessel and in the ventral nerve cord. Expression is absent from both the embryonic and larval musculature.

It localises to the cell membrane. The protein localises to the sarcolemma. Its subcellular location is the cytoplasm. The protein resides in the cytoskeleton. In terms of biological role, required for the maintenance of appropriate synaptic retrograde communication and the stabilization of muscle cell architecture or physiology. May play a role in anchoring the cytoskeleton to the plasma membrane. The chain is Dystrophin, isoform D (Dys) from Drosophila melanogaster (Fruit fly).